A 238-amino-acid chain; its full sequence is MFDPYLDELNKLLIVNHGEILLVPDGLQECYSKKQDAVIRSWLWSVPGFRRWRVTRMDVGDKLQVFNSVAYPDYLNEQPIMGIDLLWFGIKNKLVAVLDFQPLVQEKSYFDRYYQGLKSLKARYSDFNSKDNVRAYDLSNYFSPWVLLCKGDLFQASSSLPFVFSEFLNAYFDISNNFKKYNSRIEPNRVKELQISYDIYSSAHDPAHGLFKSYFGKQWSERFLKEFLFPHSIAKDKT.

This sequence belongs to the HY2 family.

The catalysed reaction is 15,16-dihydrobiliverdin + oxidized 2[4Fe-4S]-[ferredoxin] = biliverdin IXalpha + reduced 2[4Fe-4S]-[ferredoxin] + 2 H(+). Functionally, catalyzes the two-electron reduction of biliverdin IX-alpha at the C15 methine bridge. The polypeptide is 15,16-dihydrobiliverdin:ferredoxin oxidoreductase (Prochlorococcus marinus (strain MIT 9211)).